Consider the following 335-residue polypeptide: DNA-directed RNA polymerase subunit alpha (335 aa).

The interval methionine 1–glutamate 233 is alpha N-terminal domain (alpha-NTD). The alpha C-terminal domain (alpha-CTD) stretch occupies residues lysine 265–lysine 335.

It belongs to the RNA polymerase alpha chain family. In plastids the minimal PEP RNA polymerase catalytic core is composed of four subunits: alpha, beta, beta', and beta''. When a (nuclear-encoded) sigma factor is associated with the core the holoenzyme is formed, which can initiate transcription.

Its subcellular location is the plastid. It localises to the chloroplast. It catalyses the reaction RNA(n) + a ribonucleoside 5'-triphosphate = RNA(n+1) + diphosphate. Functionally, DNA-dependent RNA polymerase catalyzes the transcription of DNA into RNA using the four ribonucleoside triphosphates as substrates. This chain is DNA-directed RNA polymerase subunit alpha, found in Coffea arabica (Arabian coffee).